The sequence spans 293 residues: Digeranylgeranylglyceryl phosphate synthase (293 aa).

7 helical membrane passes run 26–46, 50–70, 107–127, 140–160, 215–235, 237–257, and 273–293; these read LMYG…FSDL, LLGY…NDYF, FVAA…VSVL, FAGN…GSII, IASL…FLLP, FLFD…LIYV, and YRKV…AGAF.

It belongs to the UbiA prenyltransferase family. DGGGP synthase subfamily. The cofactor is Mg(2+).

The protein localises to the cell membrane. It catalyses the reaction sn-3-O-(geranylgeranyl)glycerol 1-phosphate + (2E,6E,10E)-geranylgeranyl diphosphate = 2,3-bis-O-(geranylgeranyl)-sn-glycerol 1-phosphate + diphosphate. It participates in membrane lipid metabolism; glycerophospholipid metabolism. Its function is as follows. Prenyltransferase that catalyzes the transfer of the geranylgeranyl moiety of geranylgeranyl diphosphate (GGPP) to the C2 hydroxyl of (S)-3-O-geranylgeranylglyceryl phosphate (GGGP). This reaction is the second ether-bond-formation step in the biosynthesis of archaeal membrane lipids. This is Digeranylgeranylglyceryl phosphate synthase from Archaeoglobus fulgidus (strain ATCC 49558 / DSM 4304 / JCM 9628 / NBRC 100126 / VC-16).